A 277-amino-acid chain; its full sequence is Carbonyl reductase [NADPH] 1 (277 aa).

The residue at position 2 (Ser2) is an N-acetylserine. 2 positions are modified to phosphoserine: Ser2 and Ser30. Residues 10 to 34 (VTGA…GDVV), 63 to 64 (DI), and Asn90 each bind NADP(+). Glutathione-binding positions include 95–97 (FKV) and Gln106. Ser140 lines the substrate pocket. 193–194 (AY) contributes to the glutathione binding site. Tyr194 (proton acceptor) is an active-site residue. NADP(+) is bound by residues 194-198 (YGVTK) and 231-233 (VRT). Lys239 is modified (N6-1-carboxyethyl lysine). The segment at 258-277 (PPDAEGPHGQFVQDKKVEPW) is disordered.

It belongs to the short-chain dehydrogenases/reductases (SDR) family. In terms of assembly, monomer.

The protein resides in the cytoplasm. The enzyme catalyses a secondary alcohol + NADP(+) = a ketone + NADPH + H(+). It catalyses the reaction prostaglandin F2alpha + NADP(+) = prostaglandin E2 + NADPH + H(+). The catalysed reaction is prostaglandin E1 + NADP(+) = 15-oxoprostaglandin E1 + NADPH + H(+). It carries out the reaction menadione + NADPH + H(+) = menadiol + NADP(+). The enzyme catalyses prostaglandin D2 + NADP(+) = 15-oxoprostaglandin D2 + NADPH + H(+). It catalyses the reaction prostaglandin E2 + NADP(+) = 15-oxoprostaglandin E2 + NADPH + H(+). The catalysed reaction is prostaglandin F2alpha + NADP(+) = 15-oxoprostaglandin F2alpha + NADPH + H(+). It carries out the reaction daunorubicin + NADPH + H(+) = 13-dihydrodaunorubicin + NADP(+). The enzyme catalyses S-nitrosoglutathione + NADPH + H(+) = S-(hydroxysulfenamide)glutathione + NADP(+). It catalyses the reaction corticosterone + NADPH + H(+) = 20beta-dihydrocorticosterone + NADP(+). The catalysed reaction is a primary alcohol + NADP(+) = an aldehyde + NADPH + H(+). It carries out the reaction cortisol + NADPH + H(+) = 20beta-dihydrocortisol + NADP(+). Functionally, NADPH-dependent reductase with broad substrate specificity. Catalyzes the reduction of a wide variety of carbonyl compounds including quinones, prostaglandins, menadione, plus various xenobiotics. Catalyzes the reduction of the antitumor anthracyclines doxorubicin and daunorubicin to the cardiotoxic compounds doxorubicinol and daunorubicinol. Can convert prostaglandin E to prostaglandin F2-alpha. Can bind glutathione, which explains its higher affinity for glutathione-conjugated substrates. Catalyzes the reduction of S-nitrosoglutathione. In addition, participates in the glucocorticoid metabolism by catalyzing the NADPH-dependent cortisol/corticosterone into 20beta-dihydrocortisol (20b-DHF) or 20beta-corticosterone (20b-DHB), which are weak agonists of NR3C1 and NR3C2 in adipose tissue. This Mus musculus (Mouse) protein is Carbonyl reductase [NADPH] 1.